A 627-amino-acid polypeptide reads, in one-letter code: UvrABC system protein C (627 aa).

The GIY-YIG domain maps to 26–105 (PEPGVYFMRD…IKQHQPYFNV (80 aa)). One can recognise a UVR domain in the interval 215 to 250 (QELIDILSEQMEKAAEALNFEVAARIRDQIAGLKSL).

It belongs to the UvrC family. As to quaternary structure, interacts with UvrB in an incision complex.

Its subcellular location is the cytoplasm. Its function is as follows. The UvrABC repair system catalyzes the recognition and processing of DNA lesions. UvrC both incises the 5' and 3' sides of the lesion. The N-terminal half is responsible for the 3' incision and the C-terminal half is responsible for the 5' incision. The protein is UvrABC system protein C of Trichormus variabilis (strain ATCC 29413 / PCC 7937) (Anabaena variabilis).